The chain runs to 156 residues: Small ribosomal subunit protein uS7 (156 aa).

The protein belongs to the universal ribosomal protein uS7 family. As to quaternary structure, part of the 30S ribosomal subunit. Contacts proteins S9 and S11.

Functionally, one of the primary rRNA binding proteins, it binds directly to 16S rRNA where it nucleates assembly of the head domain of the 30S subunit. Is located at the subunit interface close to the decoding center, probably blocks exit of the E-site tRNA. The chain is Small ribosomal subunit protein uS7 from Streptococcus pneumoniae (strain Taiwan19F-14).